Reading from the N-terminus, the 1149-residue chain is Protogenin A (1149 aa).

A signal peptide spans 1 to 23 (MASFKRDLYLFLAVFLSISGVWS). The Extracellular segment spans residues 24–932 (FSELFFIKEP…GFYHLDQRSM (909 aa)). Ig-like domains lie at 27 to 117 (LFFI…ARLT), 122 to 209 (STFT…ATLT), 222 to 309 (PRII…ANIT), and 314 to 399 (PSLV…RLIV). 2 cysteine pairs are disulfide-bonded: Cys48–Cys100 and Cys143–Cys192. The N-linked (GlcNAc...) asparagine glycan is linked to Asn78. Residue Asn230 is glycosylated (N-linked (GlcNAc...) asparagine). A disulfide bond links Cys243 and Cys291. Residues Asn300 and Asn307 are each glycosylated (N-linked (GlcNAc...) asparagine). The cysteines at positions 335 and 382 are disulfide-linked. Fibronectin type-III domains follow at residues 408–502 (APRN…TLED), 504–600 (PLRA…TPKA), 605–704 (VPLA…VRDR), 711–804 (PPHH…TLPE), and 809–905 (APVG…IHTD). N-linked (GlcNAc...) asparagine glycosylation is found at Asn460 and Asn475. Asn617 carries an N-linked (GlcNAc...) asparagine glycan. The disordered stretch occupies residues 646–666 (GQSEAAQAQIPPHHRQHTIGG). N-linked (GlcNAc...) asparagine glycosylation is found at Asn720, Asn741, and Asn753. A helical membrane pass occupies residues 933–953 (AGIAVGVCIALTCIIICILIL). Topologically, residues 954–1149 (ACRSKTRKSC…EQEMTDLHPV (196 aa)) are cytoplasmic. The segment at 1060 to 1149 (YTETSPENPP…EQEMTDLHPV (90 aa)) is disordered. Residues 1061–1073 (TETSPENPPTTLQ) show a composition bias toward polar residues. Residues 1084–1106 (EGSHSSEGSHETSDSGRYSHDDT) are compositionally biased toward basic and acidic residues.

The protein belongs to the immunoglobulin superfamily. DCC family. As to expression, expression begins in the posterior region of the embryo and this posterior restriction persists at the 4 s stage. At early somite stages, expressed along the neural tube with lower levels in the lateral and paraxial mesoderm. Expression decreases caudally and rostrally becomes restricted to the ventral part of the brain. Widespread in the spinal cord at 30 hours post-fertilization (hpf) and is also expressed in the lens from this time. At 40 hpf, expression is restricted to the lens.

Its subcellular location is the membrane. May play a role in anteroposterior axis elongation. This Danio rerio (Zebrafish) protein is Protogenin A.